The following is a 230-amino-acid chain: Demethylmenaquinone methyltransferase (230 aa).

S-adenosyl-L-methionine is bound by residues threonine 62, aspartate 80, 100 to 101 (DG), and serine 117.

The protein belongs to the class I-like SAM-binding methyltransferase superfamily. MenG/UbiE family.

The enzyme catalyses a 2-demethylmenaquinol + S-adenosyl-L-methionine = a menaquinol + S-adenosyl-L-homocysteine + H(+). It functions in the pathway quinol/quinone metabolism; menaquinone biosynthesis; menaquinol from 1,4-dihydroxy-2-naphthoate: step 2/2. Methyltransferase required for the conversion of demethylmenaquinol (DMKH2) to menaquinol (MKH2). This chain is Demethylmenaquinone methyltransferase, found in Corynebacterium efficiens (strain DSM 44549 / YS-314 / AJ 12310 / JCM 11189 / NBRC 100395).